Consider the following 68-residue polypeptide: Putative membrane protein insertion efficiency factor (68 aa).

This sequence belongs to the UPF0161 family.

It localises to the cell inner membrane. Could be involved in insertion of integral membrane proteins into the membrane. The polypeptide is Putative membrane protein insertion efficiency factor (Hydrogenobaculum sp. (strain Y04AAS1)).